The primary structure comprises 316 residues: Homoserine kinase (316 aa).

The protein belongs to the pseudomonas-type ThrB family.

The catalysed reaction is L-homoserine + ATP = O-phospho-L-homoserine + ADP + H(+). It participates in amino-acid biosynthesis; L-threonine biosynthesis; L-threonine from L-aspartate: step 4/5. In Pseudomonas aeruginosa (strain LESB58), this protein is Homoserine kinase.